The following is a 257-amino-acid chain: Ribonuclease PH (257 aa).

Phosphate contacts are provided by residues Arg88 and 126-128 (GTR).

This sequence belongs to the RNase PH family. In terms of assembly, homohexameric ring arranged as a trimer of dimers.

The enzyme catalyses tRNA(n+1) + phosphate = tRNA(n) + a ribonucleoside 5'-diphosphate. In terms of biological role, phosphorolytic 3'-5' exoribonuclease that plays an important role in tRNA 3'-end maturation. Removes nucleotide residues following the 3'-CCA terminus of tRNAs; can also add nucleotides to the ends of RNA molecules by using nucleoside diphosphates as substrates, but this may not be physiologically important. Probably plays a role in initiation of 16S rRNA degradation (leading to ribosome degradation) during starvation. The polypeptide is Ribonuclease PH (Nocardia farcinica (strain IFM 10152)).